Consider the following 698-residue polypeptide: MRPVIVKGKHVQVMSSSKREDGEVRSAKTMDRDIVSNAFKQAVLKLNPKQMIKNPIMFVVEIGFFITLLLSVVPSLSTNVPLWFNITVTLVLLFTVFFANFAEALAEGRGKAQADSLKQSKKDVYANIVKENGEITRVLASNLKKGDMVLVKQGEMIPGDGEVIRGLASVDESAITGESAPVMKEAGGDFCSVTGGTMVVSDEITIRITSNPGESFLDKMILLVEGATRQKTPNEIALNTVLISLTLIFLIAVVTLPLFTNYLGFQIDTSILVALLVCLIPTTIGGLLSAIGIAGMDRVTKFNVLAMSGKAVEAAGDINTIILDKTGTITFGNRMAHALLPVGNETIEQLAKWAALSSVLDETPEGRSVMDYVQSKGFSYNVSKEEIGEFVPFKAETRMSGMDLKSGEKVRKGAVGAVIDWVQSQRGKIPTDLHQKADLIAKEGGTPLAVAAGNRIFGLIYLKDTVKPGMRERFEQLRQMGIKTMMCTGDNPLTAATIAKEAGVDEFVAECKPEDKIAVIKAEQELGKLVAMTGDGTNDAPALAQADVGLAMNSGTAAAKEAANMIDLDSNPTKIIEVVAIGKQLLMTRGALTTFSIANDVAKYFAIIPAMFTVAIPQMEALNIMGLHSPLSAILSALIFNALIIPMLIPLAMKGIAYKPMSSNTLLFRNLLIYGFGGVLVPFIGIKLVDLVVGLFIS.

Transmembrane regions (helical) follow at residues 56 to 76 (IMFVVEIGFFITLLLSVVPSL), 82 to 102 (LWFNITVTLVLLFTVFFANFA), 240 to 260 (TVLISLTLIFLIAVVTLPLFT), and 271 to 291 (ILVALLVCLIPTTIGGLLSAI). Residue Asp-324 is the 4-aspartylphosphate intermediate of the active site. ATP contacts are provided by residues Asp-361, Glu-365, 393 to 400 (FKAETRMS), and Lys-412. Positions 535 and 539 each coordinate Mg(2+). 3 helical membrane-spanning segments follow: residues 605-625 (FAIIPAMFTVAIPQMEALNIM), 633-653 (AILSALIFNALIIPMLIPLAM), and 677-697 (GGVLVPFIGIKLVDLVVGLFI).

Belongs to the cation transport ATPase (P-type) (TC 3.A.3) family. Type IA subfamily. As to quaternary structure, the system is composed of three essential subunits: KdpA, KdpB and KdpC.

The protein localises to the cell membrane. It carries out the reaction K(+)(out) + ATP + H2O = K(+)(in) + ADP + phosphate + H(+). Its function is as follows. Part of the high-affinity ATP-driven potassium transport (or Kdp) system, which catalyzes the hydrolysis of ATP coupled with the electrogenic transport of potassium into the cytoplasm. This subunit is responsible for energy coupling to the transport system and for the release of the potassium ions to the cytoplasm. This is Potassium-transporting ATPase ATP-binding subunit from Bacillus cytotoxicus (strain DSM 22905 / CIP 110041 / 391-98 / NVH 391-98).